Consider the following 20-residue polypeptide: Thylakoid lumenal 14.7 kDa protein (20 aa).

The segment at K1 to V20 is disordered. Basic and acidic residues predominate over residues L9–V20.

Its subcellular location is the plastid. The protein localises to the chloroplast thylakoid lumen. This is Thylakoid lumenal 14.7 kDa protein from Spinacia oleracea (Spinach).